Reading from the N-terminus, the 404-residue chain is Proteasomal ubiquitin receptor ADRM1-A (404 aa).

One can recognise a Pru domain in the interval 17 to 130; sequence SSSKYLVEFR…RKLNEYLNNP (114 aa). Over residues 195–247 the composition is skewed to low complexity; sequence GSGGPTTSSSSSSSRSQSAAVTPSSTTSSTRTTSAPVAPAAAPATTPSPAVSS. Disordered regions lie at residues 195-258 and 376-404; these read GSGG…TSPT and FAKAMQSTSSQKERESSEKKEEEEDMSLD. Residues 248–258 are compositionally biased toward polar residues; it reads NDGASEATSPT. Residues 278-390 form the DEUBAD domain; the sequence is TGEGGQQVDL…QSTSSQKERE (113 aa). Basic and acidic residues predominate over residues 386 to 395; the sequence is QKERESSEKK.

Belongs to the ADRM1 family. In terms of assembly, component of the 19S proteasome regulatory particle complex. The 26S proteasome consists of a 20S core particle (CP) and two 19S regulatory subunits (RP).

It localises to the cytoplasm. It is found in the nucleus. Component of the 26S proteasome, a multiprotein complex involved in the ATP-dependent degradation of ubiquitinated proteins. This complex plays a key role in the maintenance of protein homeostasis by removing misfolded or damaged proteins, which could impair cellular functions, and by removing proteins whose functions are no longer required. Therefore, the proteasome participates in numerous cellular processes, including cell cycle progression, apoptosis, or DNA damage repair. Within the complex, functions as a proteasomal ubiquitin receptor. In Xenopus laevis (African clawed frog), this protein is Proteasomal ubiquitin receptor ADRM1-A (adrm1-a).